The primary structure comprises 366 residues: Structure-specific endonuclease subunit SLX1 (366 aa).

The 82-residue stretch at 14 to 95 (AFYCCYLLRS…QNTHATRHID (82 aa)) folds into the GIY-YIG domain. Disordered regions lie at residues 31–59 (IGST…SMQG) and 102–124 (RAEE…KRPP). Basic residues predominate over residues 109–123 (GKKKATSPGRRRKRP). An SLX1-type zinc finger spans residues 234-289 (CGVCKNPADMSSSLILVCPIEACQTVSHLSCLSNKFLTEGGELETLVPLEGTCPGC). Residues 317–366 (KPKRKRKSDNPAESDAADGQALEQEDEELDETWMEDMSQDEEPSPVKKSR) form a disordered region. A compositionally biased stretch (acidic residues) spans 339–359 (EQEDEELDETWMEDMSQDEEP).

It belongs to the SLX1 family. Forms a heterodimer with SLX4. A divalent metal cation is required as a cofactor.

The protein resides in the nucleus. Functionally, catalytic subunit of the SLX1-SLX4 structure-specific endonuclease that resolves DNA secondary structures generated during DNA repair and recombination. Has endonuclease activity towards branched DNA substrates, introducing single-strand cuts in duplex DNA close to junctions with ss-DNA. In Phaeosphaeria nodorum (strain SN15 / ATCC MYA-4574 / FGSC 10173) (Glume blotch fungus), this protein is Structure-specific endonuclease subunit SLX1.